The sequence spans 284 residues: MPAAISRNWPAPAKLNLFLHINGRRADGYHELQTLFQFIDYCDMLDFKVTETPELILHSNMSGVVADSDNLILRAAKSLQQTTGFNGGAEIWLDKRLPMGGGLGGGSSDAATTLVALNTLWHTQLSTEELAKIGLKLGADIPVFIHGFAAFAEGVGERLQAVNPSEPWYLVIAPDAHVSTADVFQDPLLPRDTPKLAIDTLMSQPWANDCQKLVVSKYPQVAKALGWLLEYAPSRMTGTGACVFGEFTQQQQALAALAKLPSEMQGFVAQGMNLSPLITRLSHP.

Residue Lys-14 is part of the active site. 98–108 lines the ATP pocket; sequence PMGGGLGGGSS. Residue Asp-140 is part of the active site.

The protein belongs to the GHMP kinase family. IspE subfamily.

It carries out the reaction 4-CDP-2-C-methyl-D-erythritol + ATP = 4-CDP-2-C-methyl-D-erythritol 2-phosphate + ADP + H(+). It functions in the pathway isoprenoid biosynthesis; isopentenyl diphosphate biosynthesis via DXP pathway; isopentenyl diphosphate from 1-deoxy-D-xylulose 5-phosphate: step 3/6. Its function is as follows. Catalyzes the phosphorylation of the position 2 hydroxy group of 4-diphosphocytidyl-2C-methyl-D-erythritol. This chain is 4-diphosphocytidyl-2-C-methyl-D-erythritol kinase, found in Shewanella baltica (strain OS195).